The chain runs to 381 residues: MNMAQTVTQNPRGVKTLLPLDVELRNVFKFFNQEPAVHGVDLDVRQGEFFSILGPSGCGKTTTLRLIAGFEQVDAGKLLIQGQPMTNIPPYRRPVNTVFQSYALFNHLNVWDNVAFGLRLKKSRKSEVESRVKEALKLVKMESLRSRFPSQLSGGQQQRVALARALVNRPAVVLLDEPLGALDLKLRKEMQVELSNLHKNLGLTFVMVTHDQEEALSLSDRIAVMNQGKIEQIGTPQEIYERPKTSFVADFIGDTNLFSGEITVLEAEYIQIVTKTGLTIVVARNEDTPAELLKPVVVSVRPEKIQLSLYPPSSLNNCFEGRLINVMYLGTHVNYVVQLINGMNINVLQPNTFGNLPDRETPIYAWWAESDCLAINQMTND.

Residues 22-252 form the ABC transporter domain; sequence VELRNVFKFF…PKTSFVADFI (231 aa). 54–61 serves as a coordination point for ATP; that stretch reads GPSGCGKT.

This sequence belongs to the ABC transporter superfamily. Spermidine/putrescine importer (TC 3.A.1.11.1) family. In terms of assembly, the complex is composed of two ATP-binding proteins (PotA), two transmembrane proteins (PotB and PotC) and a solute-binding protein (PotD).

It localises to the cell inner membrane. It carries out the reaction ATP + H2O + polyamine-[polyamine-binding protein]Side 1 = ADP + phosphate + polyamineSide 2 + [polyamine-binding protein]Side 1.. In terms of biological role, part of the ABC transporter complex PotABCD involved in spermidine/putrescine import. Responsible for energy coupling to the transport system. This chain is Spermidine/putrescine import ATP-binding protein PotA, found in Nostoc sp. (strain PCC 7120 / SAG 25.82 / UTEX 2576).